The sequence spans 129 residues: uncharacterized protein (129 aa).

2 disordered regions span residues 1–57 (MGGG…LPNH) and 87–129 (PVSS…WLWW). The segment covering 10–20 (SGEERREKRSG) has biased composition (basic and acidic residues). Residues 87-99 (PVSSSPSRSPSSS) are compositionally biased toward low complexity.

This is an uncharacterized protein from Homo sapiens (Human).